We begin with the raw amino-acid sequence, 60 residues long: UPF0434 protein ESA_02427 (60 aa).

It belongs to the UPF0434 family.

The protein is UPF0434 protein ESA_02427 of Cronobacter sakazakii (strain ATCC BAA-894) (Enterobacter sakazakii).